Reading from the N-terminus, the 331-residue chain is dTDP-glucose 4,6-dehydratase (331 aa).

NAD(+) contacts are provided by residues 11–12 (FI), 33–36 (DALT), 57–58 (DI), 77–81 (FAAES), and T96. S81 provides a ligand contact to substrate. T120 is a substrate binding site. The active-site Proton donor is D121. Catalysis depends on proton acceptor residues E122 and Y147. 147 to 151 (YSATK) serves as a coordination point for NAD(+). N176 contributes to the substrate binding site. Residue N177 coordinates NAD(+). Residues 186 to 191 (KFIPRQ), 202 to 204 (KLY), R211, N246, and 269 to 273 (DRVGH) each bind substrate.

It belongs to the NAD(P)-dependent epimerase/dehydratase family. dTDP-glucose dehydratase subfamily. Homodimer. The cofactor is NAD(+).

The enzyme catalyses dTDP-alpha-D-glucose = dTDP-4-dehydro-6-deoxy-alpha-D-glucose + H2O. The protein operates within carbohydrate biosynthesis; dTDP-L-rhamnose biosynthesis. In terms of biological role, catalyzes the dehydration of dTDP-D-glucose to form dTDP-6-deoxy-D-xylo-4-hexulose via a three-step process involving oxidation, dehydration and reduction. Involved in the biosynthesis of the dTDP-L-rhamnose which is a component of the critical linker, D-N-acetylglucosamine-L-rhamnose disaccharide, which connects the galactan region of arabinogalactan to peptidoglycan via a phosphodiester linkage. The sequence is that of dTDP-glucose 4,6-dehydratase (rmlB) from Mycobacterium tuberculosis (strain CDC 1551 / Oshkosh).